A 595-amino-acid polypeptide reads, in one-letter code: Elongation factor 4 (595 aa).

The tr-type G domain occupies 2 to 184 (ETIRNFSIIA…TITHNIPYPK (183 aa)). Residues 14 to 19 (DHGKST) and 131 to 134 (NKID) each bind GTP.

This sequence belongs to the TRAFAC class translation factor GTPase superfamily. Classic translation factor GTPase family. LepA subfamily.

The protein localises to the cell membrane. It carries out the reaction GTP + H2O = GDP + phosphate + H(+). In terms of biological role, required for accurate and efficient protein synthesis under certain stress conditions. May act as a fidelity factor of the translation reaction, by catalyzing a one-codon backward translocation of tRNAs on improperly translocated ribosomes. Back-translocation proceeds from a post-translocation (POST) complex to a pre-translocation (PRE) complex, thus giving elongation factor G a second chance to translocate the tRNAs correctly. Binds to ribosomes in a GTP-dependent manner. The chain is Elongation factor 4 from Buchnera aphidicola subsp. Baizongia pistaciae (strain Bp).